We begin with the raw amino-acid sequence, 268 residues long: Phosphoethanolamine/phosphocholine phosphatase (268 aa).

Aspartate 32 acts as the Nucleophile in catalysis. Residues aspartate 32 and aspartate 34 each contribute to the Mg(2+) site. The active-site Proton donor is aspartate 34. Substrate is bound by residues aspartate 43 and aspartate 123. Aspartate 203 provides a ligand contact to Mg(2+).

This sequence belongs to the HAD-like hydrolase superfamily. PHOSPHO family. Mg(2+) serves as cofactor. As to expression, expressed at sites of mineralization in bone and cartilage. Highly expressed in hypertrophic chondrocytes compared to non-chondrogenic tissues. Expressed in chondrocytes but not in heart, liver, lung, kidney, spleen, muscle, adipose tissues not duodenum. In diaphyseal cortical bone, it is expressed in the osteoid layer of the periosteum, forming surfaces of growing osteons, and newly formed osteocytes, whereas it is not expressed in the endosteum and closed osteons. In growth plate cartilage, it is limited to the early hypertrophic chondrocytes and the ossification groove of Ranvier. Highly expressed on the mineralization surfaces of the cartilage remnants and trabecular bone within the primary spongiosa. Expressed in 17-day-old embryonic calvaria, the osteoid present on the intramembranous and periosteal bone surfaces but not in soft tissues examined.

The protein resides in the extracellular vesicle. The enzyme catalyses phosphoethanolamine + H2O = ethanolamine + phosphate. It catalyses the reaction phosphocholine + H2O = choline + phosphate. Phosphatase that has a high activity toward phosphoethanolamine (PEA) and phosphocholine (PCho). Involved in the generation of inorganic phosphate for bone mineralization. This Gallus gallus (Chicken) protein is Phosphoethanolamine/phosphocholine phosphatase (PHOSPHO1).